The primary structure comprises 394 residues: Probable cytosolic iron-sulfur protein assembly protein 1 (394 aa).

WD repeat units follow at residues 10 to 49, 56 to 108, 144 to 184, 191 to 230, 237 to 284, 313 to 352, and 359 to 394; these read AHND…NFPL, AHKR…EQDS, GHEN…EEFE, DHQH…DDWS, GHGG…TEQI, IHKY…KWEI, and AHGV…IWEP.

It belongs to the WD repeat CIA1 family. Interacts with NAR1.

The protein resides in the cytoplasm. It localises to the nucleus. Essential component of the cytosolic iron-sulfur (Fe/S) protein assembly machinery. Required for the maturation of extramitochondrial Fe/S proteins. The protein is Probable cytosolic iron-sulfur protein assembly protein 1 of Debaryomyces hansenii (strain ATCC 36239 / CBS 767 / BCRC 21394 / JCM 1990 / NBRC 0083 / IGC 2968) (Yeast).